We begin with the raw amino-acid sequence, 327 residues long: Phenylalanine--tRNA ligase alpha subunit (327 aa).

A Mg(2+)-binding site is contributed by Glu252.

The protein belongs to the class-II aminoacyl-tRNA synthetase family. Phe-tRNA synthetase alpha subunit type 1 subfamily. In terms of assembly, tetramer of two alpha and two beta subunits. It depends on Mg(2+) as a cofactor.

Its subcellular location is the cytoplasm. It carries out the reaction tRNA(Phe) + L-phenylalanine + ATP = L-phenylalanyl-tRNA(Phe) + AMP + diphosphate + H(+). The chain is Phenylalanine--tRNA ligase alpha subunit from Proteus mirabilis (strain HI4320).